Consider the following 616-residue polypeptide: 1-deoxy-D-xylulose-5-phosphate synthase (616 aa).

Thiamine diphosphate-binding positions include His74 and 115–117 (GHS). Asp146 serves as a coordination point for Mg(2+). Thiamine diphosphate is bound by residues 147 to 148 (GA), Asn175, Tyr282, and Glu365. Asn175 provides a ligand contact to Mg(2+).

It belongs to the transketolase family. DXPS subfamily. As to quaternary structure, homodimer. Requires Mg(2+) as cofactor. Thiamine diphosphate is required as a cofactor.

The catalysed reaction is D-glyceraldehyde 3-phosphate + pyruvate + H(+) = 1-deoxy-D-xylulose 5-phosphate + CO2. Its pathway is metabolic intermediate biosynthesis; 1-deoxy-D-xylulose 5-phosphate biosynthesis; 1-deoxy-D-xylulose 5-phosphate from D-glyceraldehyde 3-phosphate and pyruvate: step 1/1. In terms of biological role, catalyzes the acyloin condensation reaction between C atoms 2 and 3 of pyruvate and glyceraldehyde 3-phosphate to yield 1-deoxy-D-xylulose-5-phosphate (DXP). The protein is 1-deoxy-D-xylulose-5-phosphate synthase of Chromobacterium violaceum (strain ATCC 12472 / DSM 30191 / JCM 1249 / CCUG 213 / NBRC 12614 / NCIMB 9131 / NCTC 9757 / MK).